The following is a 706-amino-acid chain: Axin-related protein (706 aa).

Residues serine 72–alanine 191 enclose the RGS domain. Disordered regions lie at residues methionine 278–histidine 298, threonine 400–alanine 482, and serine 585–threonine 605. Residues alanine 402–phenylalanine 412 are compositionally biased toward polar residues. The span at arginine 453–arginine 462 shows a compositional bias: low complexity. One can recognise a DIX domain in the interval glycine 624 to cysteine 706.

Interacts with dvl2/dsh via DIX domains in both proteins. Forms a complex with ctnnb1/beta-catenin and gsk3b. Also forms heterodimers with mouse Axin1.

Its subcellular location is the cytoplasm. It localises to the cytoplasmic vesicle. Regulates the wnt signaling pathway by interacting with dvl2/dsh, which displaces gsk3b from the axnr-gsk3b complex and thus prevents degradation of ctnnb1/beta-catenin. The protein is Axin-related protein of Xenopus laevis (African clawed frog).